The primary structure comprises 142 residues: Coactosin-like protein (142 aa).

Alanine 2 is subject to N-acetylalanine. The ADF-H domain occupies 2 to 130 (ATKIDKEACR…EEDFIRSELK (129 aa)). At serine 23 the chain carries Phosphoserine. Residues 66-75 (TGDAMSKRSK) form a flexible and important for F-actin binding region. Lysine 102 carries the N6-acetyllysine modification. Serine 141 bears the Phosphoserine mark.

It belongs to the actin-binding proteins ADF family. Coactosin subfamily. Interacts with 5-lipoxygenase (ALOX5/5LO) in a calcium-independent manner. Binds to F-actin with a stoichiometry of 1:2.

Its subcellular location is the cytoplasm. It localises to the cytoskeleton. It is found in the nucleus. Functionally, binds to F-actin in a calcium-independent manner. Has no direct effect on actin depolymerization. Acts as a chaperone for ALOX5 (5LO), influencing both its stability and activity in leukotrienes synthesis. This chain is Coactosin-like protein, found in Rattus norvegicus (Rat).